The following is a 211-amino-acid chain: Adenylate kinase (211 aa).

13-18 provides a ligand contact to ATP; it reads GAGKGT. Residues 33-62 are NMP; that stretch reads STGDILRVAVANKTKLGLEAKKFMDAGQLV. AMP contacts are provided by residues T34, R39, 60 to 62, 88 to 91, and Q95; these read QLV and GFPR. Residues 129–161 are LID; sequence GRRTSKVTGKIYHIKFNPPVDEKPEDLVQRADD. Residues R130 and 139–140 contribute to the ATP site; that span reads IY. Residues R158 and R169 each contribute to the AMP site. Position 197 (K197) interacts with ATP.

The protein belongs to the adenylate kinase family. In terms of assembly, monomer.

It is found in the cytoplasm. The enzyme catalyses AMP + ATP = 2 ADP. It functions in the pathway purine metabolism; AMP biosynthesis via salvage pathway; AMP from ADP: step 1/1. In terms of biological role, catalyzes the reversible transfer of the terminal phosphate group between ATP and AMP. Plays an important role in cellular energy homeostasis and in adenine nucleotide metabolism. This Fusobacterium nucleatum subsp. nucleatum (strain ATCC 25586 / DSM 15643 / BCRC 10681 / CIP 101130 / JCM 8532 / KCTC 2640 / LMG 13131 / VPI 4355) protein is Adenylate kinase.